The primary structure comprises 493 residues: BICD family-like cargo adapter 2 (493 aa).

Coiled coils occupy residues 56–275 (ELGK…ELHM) and 365–431 (MQHV…LLST).

The protein belongs to the BICDR family.

This Xenopus laevis (African clawed frog) protein is BICD family-like cargo adapter 2 (bicdl2).